The primary structure comprises 389 residues: Dirigent protein 25 (389 aa).

Positions 1 to 21 (MAGCKVLFFLILALAITFVSA) are cleaved as a signal peptide. Composition is skewed to low complexity over residues 50-68 (GPFPTANSGPATGIASGTG), 77-86 (LGTNTGPGPL), and 98-135 (SSGTLPVTGPGPLPTSSGLLPGASSGNLPGSGSGPLPT). Positions 50–135 (GPFPTANSGP…PGSGSGPLPT (86 aa)) are disordered.

Belongs to the plant dirigent protein family. Homodimer.

Its subcellular location is the secreted. It localises to the extracellular space. The protein resides in the apoplast. In terms of biological role, dirigent proteins impart stereoselectivity on the phenoxy radical-coupling reaction, yielding optically active lignans from two molecules of coniferyl alcohol in the biosynthesis of lignans, flavonolignans, and alkaloids and thus plays a central role in plant secondary metabolism. The chain is Dirigent protein 25 (DIR25) from Arabidopsis thaliana (Mouse-ear cress).